The sequence spans 119 residues: NAD(P)H-quinone oxidoreductase subunit M (119 aa).

It belongs to the complex I NdhM subunit family. In terms of assembly, NDH-1 can be composed of about 15 different subunits; different subcomplexes with different compositions have been identified which probably have different functions.

Its subcellular location is the cellular thylakoid membrane. The enzyme catalyses a plastoquinone + NADH + (n+1) H(+)(in) = a plastoquinol + NAD(+) + n H(+)(out). It catalyses the reaction a plastoquinone + NADPH + (n+1) H(+)(in) = a plastoquinol + NADP(+) + n H(+)(out). Functionally, NDH-1 shuttles electrons from an unknown electron donor, via FMN and iron-sulfur (Fe-S) centers, to quinones in the respiratory and/or the photosynthetic chain. The immediate electron acceptor for the enzyme in this species is believed to be plastoquinone. Couples the redox reaction to proton translocation, and thus conserves the redox energy in a proton gradient. Cyanobacterial NDH-1 also plays a role in inorganic carbon-concentration. The chain is NAD(P)H-quinone oxidoreductase subunit M from Gloeothece citriformis (strain PCC 7424) (Cyanothece sp. (strain PCC 7424)).